A 150-amino-acid chain; its full sequence is Large ribosomal subunit protein uL15 (150 aa).

Positions 12-43 are disordered; that stretch reads AKKRKKRVGCGESSGHGKTSGRGHKGQKARAG. The span at 30–39 shows a compositional bias: basic residues; the sequence is TSGRGHKGQK.

This sequence belongs to the universal ribosomal protein uL15 family. Part of the 50S ribosomal subunit.

In terms of biological role, binds to the 23S rRNA. The protein is Large ribosomal subunit protein uL15 of Methylacidiphilum infernorum (isolate V4) (Methylokorus infernorum (strain V4)).